Consider the following 137-residue polypeptide: Methylmalonyl-CoA decarboxylase subunit delta (137 aa).

A helical transmembrane segment spans residues 30-50 (VTVVLGMGITVVALIFLMYII).

It belongs to the OadG family. In terms of assembly, the methylmalonyl-CoA decarboxylase is composed of four subunits: the carboxyltransferase alpha subunit (MmdA), the tunnel beta subunit (MmdB), the biotin-containing gamma subunit (MmdC) and the delta subunit (MmdD).

Its subcellular location is the cell membrane. The enzyme catalyses (S)-methylmalonyl-CoA + Na(+)(in) + H(+)(out) = propanoyl-CoA + Na(+)(out) + CO2. In terms of biological role, subunit of the sodium ion pump methylmalonyl-CoA decarboxylase, which converts the chemical energy of a decarboxylation reaction into an electrochemical gradient of Na(+) ions across the cytoplasmic membrane, thereby creating a sodium ion motive force that is used for ATP synthesis. The delta subunit is required for catalytic activity as well as for the proper assembly of the individual subunits to an enzyme complex. This chain is Methylmalonyl-CoA decarboxylase subunit delta, found in Propionigenium modestum.